A 246-amino-acid polypeptide reads, in one-letter code: 3-deoxy-manno-octulosonate cytidylyltransferase (246 aa).

It belongs to the KdsB family.

It localises to the cytoplasm. The catalysed reaction is 3-deoxy-alpha-D-manno-oct-2-ulosonate + CTP = CMP-3-deoxy-beta-D-manno-octulosonate + diphosphate. It participates in nucleotide-sugar biosynthesis; CMP-3-deoxy-D-manno-octulosonate biosynthesis; CMP-3-deoxy-D-manno-octulosonate from 3-deoxy-D-manno-octulosonate and CTP: step 1/1. It functions in the pathway bacterial outer membrane biogenesis; lipopolysaccharide biosynthesis. In terms of biological role, activates KDO (a required 8-carbon sugar) for incorporation into bacterial lipopolysaccharide in Gram-negative bacteria. The protein is 3-deoxy-manno-octulosonate cytidylyltransferase of Bradyrhizobium sp. (strain BTAi1 / ATCC BAA-1182).